Reading from the N-terminus, the 379-residue chain is Forkhead box protein E1 (379 aa).

Positions 1-11 (MTAESQQSPTR) are enriched in polar residues. The segment at 1–65 (MTAESQQSPT…RRRKRPLQKG (65 aa)) is disordered. Positions 54–63 (KGRRRKRPLQ) are enriched in basic residues. Positions 66 to 160 (KPPYSYIALI…DSGSFLRRRK (95 aa)) form a DNA-binding region, fork-head. The segment at 239–265 (HSGSEHAQPPNRSISPEVNSTSSSSCN) is disordered. Residues 251 to 265 (SISPEVNSTSSSSCN) are compositionally biased toward low complexity.

First expressed at late neural tube and early tailbud stages in the hypophyseal placode. Expression continues in the developing pituitary at late tailbud stages. As development progresses, expressed in the mesoderm of the branchial arches. At stage 38, expressed in the developing thyroid and in the pharyngeal endoderm.

It localises to the nucleus. Its function is as follows. Transcription factor that binds consensus sites on a variety of gene promoters and activate their transcription. This is Forkhead box protein E1 from Xenopus laevis (African clawed frog).